We begin with the raw amino-acid sequence, 533 residues long: (E)-beta-farnesene synthase (533 aa).

Residues Asp286, Asp290, Asn430, Ser434, and Glu438 each coordinate Mg(2+). Residues 286–290 (DDMMD) carry the DDXXD motif motif.

Belongs to the terpene synthase family. The cofactor is Mg(2+). Co(2+) is required as a cofactor. Mn(2+) serves as cofactor.

It localises to the cytoplasm. It catalyses the reaction (2E,6E)-farnesyl diphosphate = (E)-beta-farnesene + diphosphate. Its pathway is secondary metabolite biosynthesis; terpenoid biosynthesis. Sesquiterpene cyclase catalyzing the production of beta-farnesene and alpha-bergamotene in equal amounts from farnesyl diphosphate. Involved in indirect defense by producing volatile signals attracting natural enemies of herbivores. The sequence is that of (E)-beta-farnesene synthase from Zea mays subsp. huehuetenangensis (San Antonio Huista teosinte).